A 427-amino-acid chain; its full sequence is Glucose-6-phosphate isomerase (427 aa).

The Proton donor role is filled by E277. Catalysis depends on residues H298 and K414.

This sequence belongs to the GPI family.

Its subcellular location is the cytoplasm. The enzyme catalyses alpha-D-glucose 6-phosphate = beta-D-fructose 6-phosphate. It participates in carbohydrate biosynthesis; gluconeogenesis. The protein operates within carbohydrate degradation; glycolysis; D-glyceraldehyde 3-phosphate and glycerone phosphate from D-glucose: step 2/4. In terms of biological role, catalyzes the reversible isomerization of glucose-6-phosphate to fructose-6-phosphate. This Mycoplasma capricolum subsp. capricolum (strain California kid / ATCC 27343 / NCTC 10154) protein is Glucose-6-phosphate isomerase.